Here is a 170-residue protein sequence, read N- to C-terminus: Phosphopantetheine adenylyltransferase (170 aa).

T14 contributes to the substrate binding site. Residues 14–15 and H22 contribute to the ATP site; that span reads TF. Residues K46, L78, and R92 each contribute to the substrate site. Residues 93 to 95, E103, and 128 to 134 contribute to the ATP site; these read GLR and WLYISST.

This sequence belongs to the bacterial CoaD family. In terms of assembly, homohexamer. The cofactor is Mg(2+).

The protein localises to the cytoplasm. It catalyses the reaction (R)-4'-phosphopantetheine + ATP + H(+) = 3'-dephospho-CoA + diphosphate. The protein operates within cofactor biosynthesis; coenzyme A biosynthesis; CoA from (R)-pantothenate: step 4/5. Functionally, reversibly transfers an adenylyl group from ATP to 4'-phosphopantetheine, yielding dephospho-CoA (dPCoA) and pyrophosphate. This chain is Phosphopantetheine adenylyltransferase, found in Oleidesulfovibrio alaskensis (strain ATCC BAA-1058 / DSM 17464 / G20) (Desulfovibrio alaskensis).